The following is a 398-amino-acid chain: 1-deoxy-D-xylulose 5-phosphate reductoisomerase (398 aa).

NADPH contacts are provided by Thr11, Gly12, Ser13, Ile14, Arg38, Asn39, and Asn125. Lys126 lines the 1-deoxy-D-xylulose 5-phosphate pocket. Glu127 provides a ligand contact to NADPH. Position 151 (Asp151) interacts with Mn(2+). Positions 152, 153, 179, and 202 each coordinate 1-deoxy-D-xylulose 5-phosphate. Residue Glu153 coordinates Mn(2+). Gly208 is an NADPH binding site. Ser215, Asn220, Lys221, and Glu224 together coordinate 1-deoxy-D-xylulose 5-phosphate. Glu224 lines the Mn(2+) pocket.

It belongs to the DXR family. It depends on Mg(2+) as a cofactor. Requires Mn(2+) as cofactor.

The catalysed reaction is 2-C-methyl-D-erythritol 4-phosphate + NADP(+) = 1-deoxy-D-xylulose 5-phosphate + NADPH + H(+). Its pathway is isoprenoid biosynthesis; isopentenyl diphosphate biosynthesis via DXP pathway; isopentenyl diphosphate from 1-deoxy-D-xylulose 5-phosphate: step 1/6. Catalyzes the NADPH-dependent rearrangement and reduction of 1-deoxy-D-xylulose-5-phosphate (DXP) to 2-C-methyl-D-erythritol 4-phosphate (MEP). The polypeptide is 1-deoxy-D-xylulose 5-phosphate reductoisomerase (Burkholderia mallei (strain NCTC 10247)).